A 93-amino-acid chain; its full sequence is Large ribosomal subunit protein uL23 (93 aa).

It belongs to the universal ribosomal protein uL23 family. As to quaternary structure, part of the 50S ribosomal subunit. Contacts protein L29, and trigger factor when it is bound to the ribosome.

In terms of biological role, one of the early assembly proteins it binds 23S rRNA. One of the proteins that surrounds the polypeptide exit tunnel on the outside of the ribosome. Forms the main docking site for trigger factor binding to the ribosome. This is Large ribosomal subunit protein uL23 from Natranaerobius thermophilus (strain ATCC BAA-1301 / DSM 18059 / JW/NM-WN-LF).